The chain runs to 326 residues: Aspartate carbamoyltransferase catalytic subunit (326 aa).

Residues Arg-76 and Thr-77 each contribute to the carbamoyl phosphate site. Residue Lys-104 coordinates L-aspartate. Carbamoyl phosphate is bound by residues Arg-126, His-156, and Gln-159. L-aspartate contacts are provided by Arg-189 and Arg-244. The carbamoyl phosphate site is built by Gly-285 and Pro-286.

It belongs to the aspartate/ornithine carbamoyltransferase superfamily. ATCase family. Heterododecamer (2C3:3R2) of six catalytic PyrB chains organized as two trimers (C3), and six regulatory PyrI chains organized as three dimers (R2).

It carries out the reaction carbamoyl phosphate + L-aspartate = N-carbamoyl-L-aspartate + phosphate + H(+). Its pathway is pyrimidine metabolism; UMP biosynthesis via de novo pathway; (S)-dihydroorotate from bicarbonate: step 2/3. Functionally, catalyzes the condensation of carbamoyl phosphate and aspartate to form carbamoyl aspartate and inorganic phosphate, the committed step in the de novo pyrimidine nucleotide biosynthesis pathway. This Polynucleobacter asymbioticus (strain DSM 18221 / CIP 109841 / QLW-P1DMWA-1) (Polynucleobacter necessarius subsp. asymbioticus) protein is Aspartate carbamoyltransferase catalytic subunit.